The sequence spans 356 residues: Probable neutral protease 2 homolog ARB_04769 (356 aa).

The signal sequence occupies residues 1 to 17 (MQFTALLAALGAPLALA). The propeptide occupies 18-183 (ASIPAAAHNH…DDSTGVIDKR (166 aa)). 2 disulfides stabilise this stretch: Cys-191–Cys-262 and Cys-269–Cys-287. Residue Asn-205 is glycosylated (N-linked (GlcNAc...) asparagine). His-311 lines the Zn(2+) pocket. Glu-312 is an active-site residue. 2 residues coordinate Zn(2+): His-315 and Asp-326.

It belongs to the peptidase M35 family. Requires Zn(2+) as cofactor.

It localises to the secreted. It carries out the reaction Preferential cleavage of bonds with hydrophobic residues in P1'. Also 3-Asn-|-Gln-4 and 8-Gly-|-Ser-9 bonds in insulin B chain.. In terms of biological role, probable secreted metalloprotease that shows high activities on basic nuclear substrates such as histone and protamine. May be involved in virulence. In Arthroderma benhamiae (strain ATCC MYA-4681 / CBS 112371) (Trichophyton mentagrophytes), this protein is Probable neutral protease 2 homolog ARB_04769.